A 396-amino-acid polypeptide reads, in one-letter code: Ornithine aminotransferase 2 (396 aa).

K255 carries the post-translational modification N6-(pyridoxal phosphate)lysine.

This sequence belongs to the class-III pyridoxal-phosphate-dependent aminotransferase family. OAT subfamily. Pyridoxal 5'-phosphate is required as a cofactor.

The protein resides in the cytoplasm. The catalysed reaction is a 2-oxocarboxylate + L-ornithine = L-glutamate 5-semialdehyde + an L-alpha-amino acid. It participates in amino-acid biosynthesis; L-proline biosynthesis; L-glutamate 5-semialdehyde from L-ornithine: step 1/1. Catalyzes the interconversion of ornithine to glutamate semialdehyde. In Staphylococcus saprophyticus subsp. saprophyticus (strain ATCC 15305 / DSM 20229 / NCIMB 8711 / NCTC 7292 / S-41), this protein is Ornithine aminotransferase 2.